The primary structure comprises 235 residues: Phosphoribosylaminoimidazole-succinocarboxamide synthase (235 aa).

It belongs to the SAICAR synthetase family.

It carries out the reaction 5-amino-1-(5-phospho-D-ribosyl)imidazole-4-carboxylate + L-aspartate + ATP = (2S)-2-[5-amino-1-(5-phospho-beta-D-ribosyl)imidazole-4-carboxamido]succinate + ADP + phosphate + 2 H(+). The protein operates within purine metabolism; IMP biosynthesis via de novo pathway; 5-amino-1-(5-phospho-D-ribosyl)imidazole-4-carboxamide from 5-amino-1-(5-phospho-D-ribosyl)imidazole-4-carboxylate: step 1/2. The protein is Phosphoribosylaminoimidazole-succinocarboxamide synthase of Streptococcus pneumoniae (strain ATCC 700669 / Spain 23F-1).